A 609-amino-acid polypeptide reads, in one-letter code: Dihydroxy-acid dehydratase (609 aa).

Residue Asp81 participates in Mg(2+) binding. Residue Cys122 coordinates [2Fe-2S] cluster. Residues Asp123 and Lys124 each coordinate Mg(2+). Residue Lys124 is modified to N6-carboxylysine. [2Fe-2S] cluster is bound at residue Cys195. Glu491 contacts Mg(2+). Ser517 acts as the Proton acceptor in catalysis.

It belongs to the IlvD/Edd family. In terms of assembly, homodimer. The cofactor is [2Fe-2S] cluster. Mg(2+) is required as a cofactor.

The catalysed reaction is (2R)-2,3-dihydroxy-3-methylbutanoate = 3-methyl-2-oxobutanoate + H2O. It catalyses the reaction (2R,3R)-2,3-dihydroxy-3-methylpentanoate = (S)-3-methyl-2-oxopentanoate + H2O. It functions in the pathway amino-acid biosynthesis; L-isoleucine biosynthesis; L-isoleucine from 2-oxobutanoate: step 3/4. It participates in amino-acid biosynthesis; L-valine biosynthesis; L-valine from pyruvate: step 3/4. Its function is as follows. Functions in the biosynthesis of branched-chain amino acids. Catalyzes the dehydration of (2R,3R)-2,3-dihydroxy-3-methylpentanoate (2,3-dihydroxy-3-methylvalerate) into 2-oxo-3-methylpentanoate (2-oxo-3-methylvalerate) and of (2R)-2,3-dihydroxy-3-methylbutanoate (2,3-dihydroxyisovalerate) into 2-oxo-3-methylbutanoate (2-oxoisovalerate), the penultimate precursor to L-isoleucine and L-valine, respectively. This is Dihydroxy-acid dehydratase from Acinetobacter baumannii (strain AB0057).